The chain runs to 294 residues: Syntaxin-19 (294 aa).

The region spanning 209–271 (LSEIEQRHKE…NNTKEKFGLA (63 aa)) is the t-SNARE coiled-coil homology domain.

This sequence belongs to the syntaxin family. In terms of assembly, interacts with EGFR.

It localises to the cell membrane. The protein localises to the cytoplasm. In terms of biological role, plays a role in endosomal trafficking of the epidermal growth factor receptor (EGFR). The polypeptide is Syntaxin-19 (STX19) (Homo sapiens (Human)).